The following is a 337-amino-acid chain: 4-hydroxyproline 2-epimerase (337 aa).

The active-site Proton acceptor is cysteine 91. Substrate is bound by residues 92–93 (GH), aspartate 252, and 257–258 (GT).

Belongs to the proline racemase family.

It carries out the reaction trans-4-hydroxy-L-proline = cis-4-hydroxy-D-proline. Catalyzes the epimerization of trans-4-hydroxy-L-proline (t4LHyp) to cis-4-hydroxy-D-proline (c4DHyp). Is likely involved in a degradation pathway that converts t4LHyp to alpha-ketoglutarate. Displays no proline racemase activity. The chain is 4-hydroxyproline 2-epimerase from Cereibacter sphaeroides (strain ATCC 17029 / ATH 2.4.9) (Rhodobacter sphaeroides).